We begin with the raw amino-acid sequence, 215 residues long: Large ribosomal subunit protein uL3 (215 aa).

Gln-156 carries the post-translational modification N5-methylglutamine.

It belongs to the universal ribosomal protein uL3 family. Part of the 50S ribosomal subunit. Forms a cluster with proteins L14 and L19. Post-translationally, methylated by PrmB.

Functionally, one of the primary rRNA binding proteins, it binds directly near the 3'-end of the 23S rRNA, where it nucleates assembly of the 50S subunit. In Xylella fastidiosa (strain M23), this protein is Large ribosomal subunit protein uL3.